Reading from the N-terminus, the 757-residue chain is Endonuclease MutS2 (757 aa).

321–328 (GPNMGGKT) contributes to the ATP binding site. In terms of domain architecture, Smr spans 681 to 756 (IDIRGMTVEE…GTGVTVVEVK (76 aa)).

It belongs to the DNA mismatch repair MutS family. MutS2 subfamily. In terms of assembly, homodimer. Binds to stalled ribosomes, contacting rRNA.

Its function is as follows. Endonuclease that is involved in the suppression of homologous recombination and thus may have a key role in the control of bacterial genetic diversity. Acts as a ribosome collision sensor, splitting the ribosome into its 2 subunits. Detects stalled/collided 70S ribosomes which it binds and splits by an ATP-hydrolysis driven conformational change. Acts upstream of the ribosome quality control system (RQC), a ribosome-associated complex that mediates the extraction of incompletely synthesized nascent chains from stalled ribosomes and their subsequent degradation. Probably generates substrates for RQC. The sequence is that of Endonuclease MutS2 from Thermotoga petrophila (strain ATCC BAA-488 / DSM 13995 / JCM 10881 / RKU-1).